A 639-amino-acid chain; its full sequence is MIAVGPTDLEIYLFHEGSLYKSYELFGAHVIKKNGMVGTRFCVWAPHAREVRLVGSFNEWNGTNFNLMKVSNQGVWMIFIPENLEGHLYKYEITTNDGNVLLKSDPYAFYSELRPHTASIVYNIKGYQWNDQTWRRKKQRKRIYDQPLFIYELHFGSWKKKEDGSFYTYQEMAEELIPYVLEHGFTHIELLPLVEHPFDRSWGYQGIGYYSATSRYGTPHDLMYFIDRCHQAGIGVILDWVPGHFCKDSHGLYMFDGAPAYEYANMQDRENYVWGTANFDLGKPEVRSFLISNALFWMEYFHVDGFRVDAVANMLYWPNSDVLYKNTYAVEFLQKLNETVFAYDPNILMIAEDSTDWPRVTAPTYDGGLGFNYKWNMGWMNDILTYMETPPEHRKYVHNKVTFSLLYAYSENFILPFSHDEVVHGKKSLLSKMPGTYEEKFAQLRLLYGYLLTHPGKKLLFMGGEFGQFDEWKDLEQLDWMLFDFDMHRNMNMYVKELLKCYKRYKPLYELDHSPDGFEWIDVHNAEQSIFSFIRRGKKEDDLLIVVCNFTNKVYHGYKVGVPLFTRYREVINSDAIQFGGFGNINPKPIAAMEGPFHGKPYHIQMTIPPFGISILRPVKKGSVKSFMKTPHPPSHGAS.

The active-site Nucleophile is D309. E352 (proton donor) is an active-site residue.

It belongs to the glycosyl hydrolase 13 family. GlgB subfamily. As to quaternary structure, monomer.

It carries out the reaction Transfers a segment of a (1-&gt;4)-alpha-D-glucan chain to a primary hydroxy group in a similar glucan chain.. Its pathway is glycan biosynthesis; glycogen biosynthesis. Functionally, catalyzes the formation of the alpha-1,6-glucosidic linkages in glycogen by scission of a 1,4-alpha-linked oligosaccharide from growing alpha-1,4-glucan chains and the subsequent attachment of the oligosaccharide to the alpha-1,6 position. This Geobacillus stearothermophilus (Bacillus stearothermophilus) protein is 1,4-alpha-glucan branching enzyme GlgB (glgB).